A 387-amino-acid polypeptide reads, in one-letter code: Patatin-02 (387 aa).

Positions 1–23 (MATTKSFLILIVMILATTSSTFA) are cleaved as a signal peptide. One can recognise a PNPLA domain in the interval 32 to 230 (LSIDGGGIKG…TVADPALLSV (199 aa)). A GXGXXG motif is present at residues 36-41 (GGGIKG). The GXSXG signature appears at 75-79 (GTSTG). Catalysis depends on Ser-77, which acts as the Nucleophile. Asn-115 carries an N-linked (GlcNAc...) asparagine glycan. Residue Asp-216 is the Proton acceptor of the active site. The DGA/G motif lies at 216 to 218 (DGA). A coiled-coil region spans residues 361–385 (ETYEEALKRFAKLLSDRKKLRANKA).

This sequence belongs to the patatin family. As to expression, tuber and stolon.

It is found in the vacuole. In terms of biological role, probable lipolytic acyl hydrolase (LAH), an activity which is thought to be involved in the response of tubers to pathogens. The chain is Patatin-02 from Solanum tuberosum (Potato).